Consider the following 465-residue polypeptide: MRINNLLVCLVLVFSTLSISNANPEHDKWWKPPPRNCDSLSEDQCKAPNSGCKYLPFVSCCGTKKFFCVEDNGNGCGNAPLSCMKDSKTDAIYEIWSSCRPNSPFLYDYQVRNETCDQKLCEASGGVCEWVDPVPCMGTSCCPRYPVCKGGGGGGGPVSPCKNVICPEDYCCQDIHGGAYCVEKPRPPPPKPHHLCKAIKCGRGKECIVKDGKACCVPKPKPPPPPPVLCDAVQCPKGFNCVEFGGTANCVECEEKECEHHHCPPGYDCVVDSHHRPHCQRPNPGSLCRNVTCPYGYVCKAINNLPTCIRNPLPPNYPCRDLHCPSGYSCEIINDLPSCVRETHPGHCKTCHDVNCGSLDCAMVPNKCPRGSRDCCIQIPSCRLPSNSNDDYDNDPNGYDDNENEGDGLSIPCGPIITCKLNEICLLEQSRCAPLCEFVKCSPGTKCVADTTGIPVCLPNGITPY.

The first 22 residues, 1–22 (MRINNLLVCLVLVFSTLSISNA), serve as a signal peptide directing secretion. One can recognise a DSCP-N domain in the interval 35 to 153 (RNCDSLSEDQ…RYPVCKGGGG (119 aa)). Follistatin-like domains follow at residues 160–182 (PCKN…AYCV), 195–217 (LCKA…ACCV), 229–251 (LCDA…ANCV), 257–280 (ECEH…PHCQ), 287–309 (LCRN…PTCI), 318–340 (PCRD…PSCV), and 435–458 (LCEF…PVCL).

In terms of biological role, may contribute to the structure of the coat at the interface between the middle, cellulosic layer and the outer, electron-dense, proteinaceous layer. The protein is Probable spore coat protein DDB_G0283555 of Dictyostelium discoideum (Social amoeba).